The sequence spans 374 residues: Peroxisome biogenesis factor 10 (374 aa).

2 stretches are compositionally biased toward polar residues: residues 1–11 and 18–31; these read MSNVQSQSNSH and VNRS…QQIR. Topologically, residues 1–82 are peroxisomal matrix; the sequence is MSNVQSQSNS…NSNLYPSYAD (82 aa). The segment at 1 to 82 is disordered; it reads MSNVQSQSNS…NSNLYPSYAD (82 aa). Residues 35-76 show a composition bias toward low complexity; sequence PTNNNNNNNNNSINNINNNTQRQPLNNNNNNNNNINRNNSNL. Residues 83-112 traverse the membrane as a helical segment; it reads QPDILRSSQKDEYYKKLFEDQCFEMLTRIT. Position 113 (Gly-113) is a topological domain, cytoplasmic. The chain crosses the membrane as a helical span at residues 114–135; the sequence is PRFIMNRQSESKLLANTIYYLL. The Peroxisomal matrix segment spans residues 136–165; that stretch reads TTMIGSQTLGEEYCNLRKIKDKTFSIPSIP. The chain crosses the membrane as a helical span at residues 166-181; it reads DRIKLYFFHLLAPYLI. The Cytoplasmic portion of the chain corresponds to 182-192; that stretch reads KKSLPKLFQRH. The chain crosses the membrane as a helical span at residues 193 to 216; that stretch reads PKLYILKEIFPKFERLHLALFYFN. At 217-243 the chain is on the peroxisomal matrix side; the sequence is GSYFEFSKRLSDIRYIFNRKIDQKRPK. A helical membrane pass occupies residues 244-263; it reads YDILGLLIIIQILLSTFMYL. The Cytoplasmic portion of the chain corresponds to 264-374; that stretch reads KENSFFLKQQ…IRTCVPLYNY (111 aa). Residues Cys-322, Cys-325, Cys-337, His-339, Cys-342, Cys-345, Cys-356, and Cys-359 each contribute to the Zn(2+) site. The RING-type zinc finger occupies 322-360; it reads CTLCLEVRTHTTATICGHLFCWHCITEWCNNKEQCPVCR.

Belongs to the pex2/pex10/pex12 family. As to quaternary structure, component of the PEX2-PEX10-PEX12 retrotranslocation channel.

The protein localises to the peroxisome membrane. It carries out the reaction S-ubiquitinyl-[E2 ubiquitin-conjugating enzyme]-L-cysteine + [acceptor protein]-L-lysine = [E2 ubiquitin-conjugating enzyme]-L-cysteine + N(6)-ubiquitinyl-[acceptor protein]-L-lysine.. The protein operates within protein modification; protein ubiquitination. The E3 ubiquitin-protein ligase activity is stimulated by PEX12. E3 ubiquitin-protein ligase component of a retrotranslocation channel required for peroxisome organization by mediating export of the PEX5 receptor from peroxisomes to the cytosol, thereby promoting PEX5 recycling. The retrotranslocation channel is composed of PEX2, PEX10 and PEX12; each subunit contributing transmembrane segments that coassemble into an open channel that specifically allows the passage of PEX5 through the peroxisomal membrane. PEX10 also regulates PEX5 recycling by acting as a E3 ubiquitin-protein ligase. When PEX5 recycling is compromised, PEX10 catalyzes polyubiquitination of PEX5 during its passage through the retrotranslocation channel, leading to its degradation. The protein is Peroxisome biogenesis factor 10 (pex10) of Dictyostelium discoideum (Social amoeba).